Reading from the N-terminus, the 265-residue chain is Mlc titration factor A (265 aa).

Zn(2+) contacts are provided by His-111, His-148, His-152, and Glu-211.

This sequence belongs to the MtfA family. Interacts with Mlc. Zn(2+) is required as a cofactor.

The protein resides in the cytoplasm. Involved in the modulation of the activity of the glucose-phosphotransferase system (glucose-PTS). Interacts with the transcriptional repressor Mlc, preventing its interaction with DNA and leading to the modulation of expression of genes regulated by Mlc, including ptsG, which encodes the PTS system glucose-specific EIICB component. Functionally, shows zinc-dependent metallopeptidase activity. The protein is Mlc titration factor A of Escherichia coli O8 (strain IAI1).